Consider the following 52-residue polypeptide: uncharacterized protein (52 aa).

The interval 1–52 is disordered; that stretch reads MFGFIYRDPSPAPQGKIRDGSKDPKTPGGGGGGGGGISPNGGAPLGGKGFSM. Basic and acidic residues predominate over residues 16–25; sequence KIRDGSKDPK. Residues 27–52 are compositionally biased toward gly residues; the sequence is PGGGGGGGGGISPNGGAPLGGKGFSM.

This is an uncharacterized protein from Dictyostelium discoideum (Social amoeba).